Here is a 352-residue protein sequence, read N- to C-terminus: Thymidine kinase (352 aa).

Glycine 32–serine 39 lines the ATP pocket. Glutamate 60 acts as the Proton acceptor in catalysis. Tyrosine 78, glutamine 102, phenylalanine 105, and phenylalanine 148 together coordinate substrate. Arginine 192 serves as a coordination point for ATP. Arginine 198 is a substrate binding site.

It belongs to the herpesviridae thymidine kinase family. In terms of assembly, homodimer.

The catalysed reaction is thymidine + ATP = dTMP + ADP + H(+). Functionally, catalyzes the transfer of the gamma-phospho group of ATP to thymidine to generate dTMP in the salvage pathway of pyrimidine synthesis. The dTMP serves as a substrate for DNA polymerase during viral DNA replication. Allows the virus to be reactivated and to grow in non-proliferative cells lacking a high concentration of phosphorylated nucleic acid precursors. The sequence is that of Thymidine kinase from Equine herpesvirus 4 (strain 1942) (EHV-4).